We begin with the raw amino-acid sequence, 499 residues long: Glycerol kinase (499 aa).

Position 13 (T13) interacts with ADP. T13, T14, and S15 together coordinate ATP. A sn-glycerol 3-phosphate-binding site is contributed by T13. R17 contributes to the ADP binding site. Positions 83, 84, 135, and 245 each coordinate sn-glycerol 3-phosphate. Residues R83, E84, Y135, D245, and Q246 each coordinate glycerol. ADP contacts are provided by T267 and G310. 4 residues coordinate ATP: T267, G310, Q314, and A411. Residues A411 and N415 each coordinate ADP.

It belongs to the FGGY kinase family.

It carries out the reaction glycerol + ATP = sn-glycerol 3-phosphate + ADP + H(+). It participates in polyol metabolism; glycerol degradation via glycerol kinase pathway; sn-glycerol 3-phosphate from glycerol: step 1/1. Inhibited by fructose 1,6-bisphosphate (FBP). Key enzyme in the regulation of glycerol uptake and metabolism. Catalyzes the phosphorylation of glycerol to yield sn-glycerol 3-phosphate. The protein is Glycerol kinase of Xylella fastidiosa (strain 9a5c).